We begin with the raw amino-acid sequence, 168 residues long: MKKSDPAPGGEEKVDRIVRQVWDLTEPVIRAEGMEIIEIEYRRESPGWVLRVFVDQEGGVSVDDCARISRVVGDLLDVADIIHYPYHLEVSSPGLNRPLRKREQFAKVVGKVIEVKTLVPFGTRRNFKGILKEVGVERIRMDCDNQLFEIPFSNMDRARLRYFDSQED.

It belongs to the RimP family.

It localises to the cytoplasm. Its function is as follows. Required for maturation of 30S ribosomal subunits. In Syntrophobacter fumaroxidans (strain DSM 10017 / MPOB), this protein is Ribosome maturation factor RimP.